Here is a 465-residue protein sequence, read N- to C-terminus: Ribulose bisphosphate carboxylase large chain (465 aa).

The residue at position 4 (Lys-4) is an N6,N6,N6-trimethyllysine. Residues Asn-113 and Thr-163 each contribute to the substrate site. The Proton acceptor role is filled by Lys-165. Lys-167 contributes to the substrate binding site. Residues Lys-191, Asp-193, and Glu-194 each contribute to the Mg(2+) site. The residue at position 191 (Lys-191) is an N6-carboxylysine. Residue His-284 is the Proton acceptor of the active site. Substrate-binding residues include Arg-285, His-317, and Ser-369.

It belongs to the RuBisCO large chain family. Type I subfamily. In terms of assembly, heterohexadecamer of 8 large chains and 8 small chains; disulfide-linked. The disulfide link is formed within the large subunit homodimers. Mg(2+) serves as cofactor. Post-translationally, the disulfide bond which can form in the large chain dimeric partners within the hexadecamer appears to be associated with oxidative stress and protein turnover.

The protein resides in the plastid. The protein localises to the chloroplast. It catalyses the reaction 2 (2R)-3-phosphoglycerate + 2 H(+) = D-ribulose 1,5-bisphosphate + CO2 + H2O. The catalysed reaction is D-ribulose 1,5-bisphosphate + O2 = 2-phosphoglycolate + (2R)-3-phosphoglycerate + 2 H(+). In terms of biological role, ruBisCO catalyzes two reactions: the carboxylation of D-ribulose 1,5-bisphosphate, the primary event in carbon dioxide fixation, as well as the oxidative fragmentation of the pentose substrate in the photorespiration process. Both reactions occur simultaneously and in competition at the same active site. In Senega cruciata (Cross-leaved milkwort), this protein is Ribulose bisphosphate carboxylase large chain.